The primary structure comprises 263 residues: uncharacterized protein (263 aa).

12 to 19 contacts ATP; sequence KGGVGKTT.

This sequence belongs to the ParA family. MinD subfamily.

This is an uncharacterized protein from Methanocaldococcus jannaschii (strain ATCC 43067 / DSM 2661 / JAL-1 / JCM 10045 / NBRC 100440) (Methanococcus jannaschii).